We begin with the raw amino-acid sequence, 929 residues long: Facilitated trehalose transporter Tret1 (929 aa).

Positions 1–275 (MSGRDNRAAG…VGYQQQKATS (275 aa)) are disordered. At 1 to 462 (MSGRDNRAAG…LEVYRPTTNP (462 aa)) the chain is on the cytoplasmic side. Residues 10 to 26 (GAGGGSGGGGGGGGGGG) show a composition bias toward gly residues. A compositionally biased stretch (basic and acidic residues) spans 41 to 59 (KLKEKLTRAGEELGYHRVE). The span at 60 to 72 (SNLSASNTATSLD) shows a compositional bias: polar residues. 3 stretches are compositionally biased toward low complexity: residues 85-141 (AAPQ…QPLR), 168-178 (QEIQQQQLQQQ), and 237-254 (SNSNNNSKNNSKTTVAAD). 3 positions are modified to phosphoserine: Ser320, Ser321, and Ser322. The interval 352–371 (VLHGSSTDSDEEGEDAEHKR) is disordered. A phosphoserine mark is found at Ser392 and Ser394. The tract at residues 398 to 420 (FLSSRQNFQQQRSISTDSRKSRR) is disordered. The segment covering 402-413 (RQNFQQQRSIST) has biased composition (polar residues). A helical transmembrane segment spans residues 463 to 483 (IYIWTQVLAALSVSLGSLVVG). Residues 484-512 (FSSAYTSPALVSMTDRNLTSFDVSTEDAS) are Extracellular-facing. N-linked (GlcNAc...) asparagine glycosylation occurs at Asn500. A helical membrane pass occupies residues 513–533 (WVGGIMPLAGLAGGIAGGPLI). Topologically, residues 534 to 541 (EYLGRRNT) are cytoplasmic. The helical transmembrane segment at 542–562 (ILATAVPFIISWLLIACAVNV) threads the bilayer. The Extracellular portion of the chain corresponds to 563-569 (PMVLSGR). A helical transmembrane segment spans residues 570 to 590 (FLAGFCVGIASLSLPVYLGET). Over 591-596 (VQPEVR) the chain is Cytoplasmic. The helical transmembrane segment at 597-617 (GTLGLLPTAFGNIGILLCFIA) threads the bilayer. Topologically, residues 618 to 624 (GTYMDWS) are extracellular. The chain crosses the membrane as a helical span at residues 625-645 (MLAFLGGALPVPFLILMFLIP). At 646–708 (ETPRWYVSRG…ELLKRSNLKP (63 aa)) the chain is on the cytoplasmic side. A helical membrane pass occupies residues 709 to 729 (LSISLGLMFFQQLSGINAVIF). The Extracellular portion of the chain corresponds to 730–745 (YTVQIFKDAGSTLDGN). The helical transmembrane segment at 746–766 (VCTIIVGTVNFIATFIGILLI) threads the bilayer. Over 767-772 (DRAGRK) the chain is Cytoplasmic. The helical transmembrane segment at 773–793 (ILLYVSNIAMILTLFVLGGFF) threads the bilayer. Topologically, residues 794-804 (YCKANGMDVSN) are extracellular. Residues 805–825 (VGLLPLCCFVVYILGFSLGFG) traverse the membrane as a helical segment. The Cytoplasmic segment spans residues 826 to 839 (PIPWLMMGEILPAK). Residues 840-860 (IRGSAASVATAFNWTCTFVVT) form a helical membrane-spanning segment. The Extracellular segment spans residues 861-873 (KSFLDMIKLIGAH). A helical transmembrane segment spans residues 874-894 (GAFWLFGVICCIGMFFVIFCV). Topologically, residues 895–929 (PETQGKTLEDIERKMMGRVRRMSSVANIKPLSFNM) are cytoplasmic. 2 positions are modified to phosphoserine: Ser917 and Ser918.

Belongs to the major facilitator superfamily. Sugar transporter (TC 2.A.1.1) family. Trehalose transporter subfamily.

It localises to the cell membrane. In terms of biological role, low-capacity facilitative transporter for trehalose. Does not transport maltose, sucrose or lactose. Mediates the bidirectional transfer of trehalose. Responsible for the transport of trehalose synthesized in the fat body and the incorporation of trehalose into other tissues that require a carbon source, thereby regulating trehalose levels in the hemolymph. The polypeptide is Facilitated trehalose transporter Tret1 (Drosophila grimshawi (Hawaiian fruit fly)).